We begin with the raw amino-acid sequence, 580 residues long: Trafficking protein particle complex subunit 14 (580 aa).

Disordered stretches follow at residues 95–134 (GSAGDQDADPPGGGDPGGGGLFRGCSPLLTHGQGPATSGG) and 480–533 (VSHP…RSGS). The segment covering 105-116 (PGGGDPGGGGLF) has biased composition (gly residues). S491 carries the post-translational modification Phosphoserine. Residues 492–502 (RKSSPSSPAVR) show a composition bias toward low complexity. Polar residues predominate over residues 512–525 (LGRSQSFSHQQPSR). S517 carries the post-translational modification Phosphoserine. T541 bears the Phosphothreonine mark. Phosphoserine is present on S546.

As to quaternary structure, component of the multisubunit TRAPP II complex, which includes at least TRAPPC1, TRAPPC2, TRAPPC2L, TRAPPC3, TRAPPC4, TRAPPC5, TRAPPC6A/B, TRAPPC9, TRAPPC10 and TRAPPC14. TRAPPC9, TRAPPC10 and TRAPPC14 are specific subunits of the TRAPP II complex. Interacts with alpha-tubulin during mitosis. Interacts with RAB3IP (via the N-terminal region); this interaction mediates RAB3IP association with the TRAPP II complex. Interacts with TRAPPC10. Interacts with FBF1.

It localises to the cytoplasm. It is found in the cytoskeleton. Its subcellular location is the spindle. The protein resides in the vesicle. The protein localises to the midbody. Functionally, specific subunit of the TRAPP (transport protein particle) II complex, a highly conserved vesicle tethering complex that functions in late Golgi trafficking as a membrane tether. TRAPPC14 is dispensable for TRAPPII complex integrity but mediates RAB3IP preciliary vesicle trafficking to the mother centriole during ciliogenesis. Modulates YAP1 activity as transcriptional regulator. The chain is Trafficking protein particle complex subunit 14 from Mus musculus (Mouse).